The chain runs to 44 residues: Protein PsbN (44 aa).

Residues F6 to V26 form a helical membrane-spanning segment.

Belongs to the PsbN family.

It is found in the plastid. The protein localises to the chloroplast thylakoid membrane. Functionally, may play a role in photosystem I and II biogenesis. The protein is Protein PsbN of Tupiella akineta (Green alga).